Here is an 824-residue protein sequence, read N- to C-terminus: Glycophorin-binding protein 130 (824 aa).

A PEXEL motif motif is present at residues 84 to 88 (RILAE). 11 disordered regions span residues 97–236 (EKTT…GQIM), 258–291 (NTDP…EYAS), 310–334 (DPND…PEGQ), 358–384 (NTDP…PEGQ), 408–431 (NTDP…SDPE), 457–482 (NTDP…DPEG), 507–532 (NTDP…DPEG), 559–582 (DPND…DPEG), 659–683 (DPND…PEGQ), 711–733 (NDEV…PEGQ), and 759–783 (DPND…PEGQ). Basic and acidic residues-rich tracts occupy residues 117-140 (TKKD…SEKQ) and 174-198 (KKEE…EPKA). A compositionally biased stretch (polar residues) spans 200–228 (KVSQKPSTSTRSNNEVKIRAASNQETLTS). 12 GBP repeats span residues 226–275 (LTSA…NKED), 276–325 (LTSA…NKED), 326–375 (LTSA…NKED), 376–424 (LTSA…DNKE), 425–474 (LTSS…NKED), 475–524 (LTSA…NKED), 525–574 (LTSA…NKED), 575–624 (LTSA…NKEE), 625–674 (LTSS…NKED), 675–724 (LTSA…NKED), 725–774 (LTSA…NKED), and 775–824 (LTSA…NNEA). Basic and acidic residues-rich tracts occupy residues 264–276 (EVER…KEDL), 314–326 (DVER…KEDL), 364–376 (EVER…KEDL), 414–426 (EVER…KELT), 463–475 (EVER…KEDL), 513–525 (EVER…KEDL), 563–575 (EVER…KEDL), 663–675 (EVER…KEDL), 713–725 (EVER…KEDL), and 763–775 (DVER…KEDL).

In terms of assembly, interacts with host glycophorin.

It is found in the secreted. The protein localises to the cell surface. It localises to the host cytoplasm. Functionally, involved in merozoite invasion of host erythrocytes. The sequence is that of Glycophorin-binding protein 130 from Plasmodium falciparum (isolate 3D7).